A 263-amino-acid chain; its full sequence is Shikimate dehydrogenase (NADP(+)) (263 aa).

Shikimate contacts are provided by residues 16 to 18 (SKS) and Thr-65. The active-site Proton acceptor is Lys-69. Shikimate contacts are provided by Asn-90 and Asp-105. NADP(+) contacts are provided by residues 125–129 (GSGGS) and Leu-208. Residue Tyr-210 coordinates shikimate. Position 230 (Gly-230) interacts with NADP(+).

Belongs to the shikimate dehydrogenase family. Homodimer.

It catalyses the reaction shikimate + NADP(+) = 3-dehydroshikimate + NADPH + H(+). It functions in the pathway metabolic intermediate biosynthesis; chorismate biosynthesis; chorismate from D-erythrose 4-phosphate and phosphoenolpyruvate: step 4/7. In terms of biological role, involved in the biosynthesis of the chorismate, which leads to the biosynthesis of aromatic amino acids. Catalyzes the reversible NADPH linked reduction of 3-dehydroshikimate (DHSA) to yield shikimate (SA). The sequence is that of Shikimate dehydrogenase (NADP(+)) from Helicobacter acinonychis (strain Sheeba).